A 162-amino-acid chain; its full sequence is NADH-quinone oxidoreductase subunit I (162 aa).

2 4Fe-4S ferredoxin-type domains span residues 52–82 (LRRYPNGEERCIACKLCEAICPAQAITIEAG) and 93–122 (TRYDIDMVKCIYCGMCQEACPVDAIVEGPN). The [4Fe-4S] cluster site is built by C62, C65, C68, C72, C102, C105, C108, and C112.

Belongs to the complex I 23 kDa subunit family. In terms of assembly, NDH-1 is composed of 14 different subunits. Subunits NuoA, H, J, K, L, M, N constitute the membrane sector of the complex. [4Fe-4S] cluster serves as cofactor.

It is found in the cell inner membrane. The enzyme catalyses a quinone + NADH + 5 H(+)(in) = a quinol + NAD(+) + 4 H(+)(out). Functionally, NDH-1 shuttles electrons from NADH, via FMN and iron-sulfur (Fe-S) centers, to quinones in the respiratory chain. The immediate electron acceptor for the enzyme in this species is believed to be ubiquinone. Couples the redox reaction to proton translocation (for every two electrons transferred, four hydrogen ions are translocated across the cytoplasmic membrane), and thus conserves the redox energy in a proton gradient. The protein is NADH-quinone oxidoreductase subunit I of Methylobacterium radiotolerans (strain ATCC 27329 / DSM 1819 / JCM 2831 / NBRC 15690 / NCIMB 10815 / 0-1).